A 52-amino-acid chain; its full sequence is Histone H2A (52 aa).

The interval methionine 1 to glutamine 25 is disordered. An N-acetylserine modification is found at serine 2. The residue at position 2 (serine 2) is a Phosphoserine. Position 6 is an N6-(2-hydroxyisobutyryl)lysine (lysine 6). N6-acetyllysine is present on lysine 6. Positions threonine 7 to serine 19 are enriched in basic residues. Lysine 10 bears the N6-(2-hydroxyisobutyryl)lysine; alternate mark. The residue at position 10 (lysine 10) is an N6-lactoyllysine; alternate. Residue lysine 10 is modified to N6-succinyllysine. Residues lysine 14 and lysine 16 each participate in a glycyl lysine isopeptide (Lys-Gly) (interchain with G-Cter in ubiquitin) cross-link. Position 37 is an N6-(2-hydroxyisobutyryl)lysine; alternate (lysine 37).

In terms of assembly, the nucleosome is a histone octamer containing two molecules each of H2A, H2B, H3 and H4 assembled in one H3-H4 heterotetramer and two H2A-H2B heterodimers. The octamer wraps approximately 147 bp of DNA. In terms of processing, acetylation is not necessary for the antibacterial activity. Monoubiquitination in C-terminus gives a specific tag for epigenetic transcriptional repression. Following DNA double-strand breaks (DSBs), it is ubiquitinated through 'Lys-63' linkage of ubiquitin moieties, leading to the recruitment of repair proteins to sites of DNA damage. H2AK119Ub and ionizing radiation-induced 'Lys-63'-linked ubiquitination are distinct events. Post-translationally, phosphorylation on Ser-2 is enhanced during mitosis. Phosphorylation on Ser-2 directly represses transcription.

The protein resides in the nucleus. It localises to the chromosome. It is found in the secreted. In terms of biological role, core component of nucleosome. Nucleosomes wrap and compact DNA into chromatin, limiting DNA accessibility to the cellular machineries which require DNA as a template. Histones thereby play a central role in transcription regulation, DNA repair, DNA replication and chromosomal stability. DNA accessibility is regulated via a complex set of post-translational modifications of histones, also called histone code, and nucleosome remodeling. Hipposin shows strong antimicrobial activity against several Gram-positive and Gram-negative bacteria. This is Histone H2A from Hippoglossus hippoglossus (Atlantic halibut).